The primary structure comprises 494 residues: 4-trimethylaminobutyraldehyde dehydrogenase (494 aa).

At serine 2 the chain carries N-acetylserine. The residue at position 30 (lysine 30) is an N6-acetyllysine; alternate. At lysine 30 the chain carries N6-succinyllysine; alternate. An N6-succinyllysine modification is found at lysine 59. NAD(+) is bound by residues lysine 180 and 232–236 (GSVPT). Catalysis depends on glutamate 254, which acts as the Proton acceptor. Catalysis depends on cysteine 288, which acts as the Nucleophile. Position 298 is an N6-acetyllysine (lysine 298). At lysine 303 the chain carries N6-acetyllysine; alternate. Residue lysine 303 is modified to N6-succinyllysine; alternate. At lysine 344 the chain carries N6-acetyllysine. Glutamate 391 is a binding site for NAD(+).

Belongs to the aldehyde dehydrogenase family. Homotetramer.

The protein localises to the cytoplasm. The protein resides in the cytosol. The enzyme catalyses 4-(trimethylamino)butanal + NAD(+) + H2O = 4-(trimethylamino)butanoate + NADH + 2 H(+). It catalyses the reaction an aldehyde + NAD(+) + H2O = a carboxylate + NADH + 2 H(+). It carries out the reaction 4-aminobutanal + NAD(+) + H2O = 4-aminobutanoate + NADH + 2 H(+). The catalysed reaction is formaldehyde + NAD(+) + H2O = formate + NADH + 2 H(+). The enzyme catalyses acetaldehyde + NAD(+) + H2O = acetate + NADH + 2 H(+). It catalyses the reaction imidazole-4-acetaldehyde + NAD(+) + H2O = imidazole-4-acetate + NADH + 2 H(+). It carries out the reaction acrolein + NAD(+) + H2O = acrylate + NADH + 2 H(+). The catalysed reaction is (5-hydroxyindol-3-yl)acetaldehyde + NAD(+) + H2O = (5-hydroxyindol-3-yl)acetate + NADH + 2 H(+). The enzyme catalyses 3,4-dihydroxyphenylacetaldehyde + NAD(+) + H2O = 3,4-dihydroxyphenylacetate + NADH + 2 H(+). It catalyses the reaction spermine monoaldehyde + NAD(+) + H2O = N-(2-carboxyethyl)spermidine + NADH + 2 H(+). It carries out the reaction propanal + NAD(+) + H2O = propanoate + NADH + 2 H(+). The catalysed reaction is butanal + NAD(+) + H2O = butanoate + NADH + 2 H(+). The enzyme catalyses pentanal + NAD(+) + H2O = pentanoate + NADH + 2 H(+). It catalyses the reaction hexanal + NAD(+) + H2O = hexanoate + NADH + 2 H(+). The protein operates within amine and polyamine biosynthesis; carnitine biosynthesis. Converts gamma-trimethylaminobutyraldehyde into gamma-butyrobetaine with high efficiency (in vitro). Can catalyze the irreversible oxidation of a broad range of aldehydes to the corresponding acids in an NAD-dependent reaction, but with low efficiency. Catalyzes the oxidation of aldehydes arising from biogenic amines and polyamines. This Mus musculus (Mouse) protein is 4-trimethylaminobutyraldehyde dehydrogenase.